Consider the following 623-residue polypeptide: Serine/threonine-protein kinase nrc-2 (623 aa).

A disordered region spans residues 1-215 (MPSTKNANGE…GLGALPPPIR (215 aa)). Basic and acidic residues-rich tracts occupy residues 27–36 (SKDHKDRDAH) and 170–180 (LSKEPLEESKD). The segment covering 199–209 (LAAPDADGLGA) has biased composition (low complexity). Positions 242-532 (FDKIKLIGKG…ASDIKTHPFF (291 aa)) constitute a Protein kinase domain. Residues 248-256 (IGKGDVGKV) and Lys-271 each bind ATP. Asp-367 (proton acceptor) is an active-site residue. Residues 569–596 (VDISGSRQMGLKGEPLESGMVTPGENAV) form a disordered region.

It belongs to the protein kinase superfamily. Ser/Thr protein kinase family. KIN82 subfamily.

The catalysed reaction is L-seryl-[protein] + ATP = O-phospho-L-seryl-[protein] + ADP + H(+). It carries out the reaction L-threonyl-[protein] + ATP = O-phospho-L-threonyl-[protein] + ADP + H(+). In terms of biological role, controls entry of the cell into the asexual developmental program. Required to repress entry into the conidiation program. This Neurospora crassa (strain ATCC 24698 / 74-OR23-1A / CBS 708.71 / DSM 1257 / FGSC 987) protein is Serine/threonine-protein kinase nrc-2 (nrc-2).